The primary structure comprises 216 residues: MRDQFISLALILCVLHSACGLYFHISETERKCFIEEVPDETTVIVNYKVELYDPRSNGFMPSSPGIGMHVEVRDSDDKIVLSRVYSSQGRISFTSHTPGEHVICMFSNSTAWFSGAQLRVHLDIQVGEHAIDYANVAQKEKLTELQLRIRQLLDQVEQITKEQNYQRYREERFRHTSESTNSRVLWWSLAQTVVLVCMGFWQMRHLKSFFEAKKLV.

The signal sequence occupies residues 1–20; that stretch reads MRDQFISLALILCVLHSACG. At 21 to 182 the chain is on the lumenal side; sequence LYFHISETER…FRHTSESTNS (162 aa). The GOLD domain maps to 30–126; the sequence is RKCFIEEVPD…QLRVHLDIQV (97 aa). A coiled-coil region spans residues 134–164; the sequence is ANVAQKEKLTELQLRIRQLLDQVEQITKEQN. A helical transmembrane segment spans residues 183–203; that stretch reads RVLWWSLAQTVVLVCMGFWQM. Residues 204-216 lie on the Cytoplasmic side of the membrane; the sequence is RHLKSFFEAKKLV. The Prevents secretion from ER motif lies at 213 to 216; it reads KKLV.

Belongs to the EMP24/GP25L family.

The protein localises to the endoplasmic reticulum membrane. In terms of biological role, eca and bai are essential, though not redundant, for dorsoventral patterning of the embryo. Specifically required during early embryogenesis for the activity of maternal tkv, while the zygotic tkv is not affected. Involved in Golgi organization. This chain is Transmembrane emp24 domain-containing protein eca, found in Drosophila simulans (Fruit fly).